The sequence spans 141 residues: Hemoglobin subunit alpha-A (141 aa).

The 141-residue stretch at 1–141 (VLSAADKNNV…VGNVLTAKYR (141 aa)) folds into the Globin domain. Histidine 58 is an O2 binding site. Histidine 87 provides a ligand contact to heme b.

It belongs to the globin family. In terms of assembly, heterotetramer of two alpha chains and two beta chains. As to expression, red blood cells.

Involved in oxygen transport from the lung to the various peripheral tissues. The sequence is that of Hemoglobin subunit alpha-A (HBAA) from Francolinus pondicerianus (Grey francolin).